The chain runs to 329 residues: Pantothenate kinase (329 aa).

Positions 1-22 (MPAQGPSHGELPPADAGRESSP) are disordered. 107-114 (GSVAVGKS) contacts ATP.

This sequence belongs to the prokaryotic pantothenate kinase family.

The protein localises to the cytoplasm. The enzyme catalyses (R)-pantothenate + ATP = (R)-4'-phosphopantothenate + ADP + H(+). It functions in the pathway cofactor biosynthesis; coenzyme A biosynthesis; CoA from (R)-pantothenate: step 1/5. This is Pantothenate kinase from Nocardioides sp. (strain ATCC BAA-499 / JS614).